The primary structure comprises 398 residues: Cysteine protease ATG4A (398 aa).

Cysteine 77 functions as the Nucleophile in the catalytic mechanism. Active-site residues include aspartate 279 and histidine 281. An LIR motif is present at residues 393-396 (FEIL).

The protein belongs to the peptidase C54 family. Interacts with ATG9A; the interaction is direct.

Its subcellular location is the cytoplasm. The enzyme catalyses [protein]-C-terminal L-amino acid-glycyl-phosphatidylethanolamide + H2O = [protein]-C-terminal L-amino acid-glycine + a 1,2-diacyl-sn-glycero-3-phosphoethanolamine. Inhibited by N-ethylmaleimide. Redox-regulated during autophagy since reducing conditions activate ATG4A whereas an oxidizing environment such as the presence of H(2)O(2) inhibits its activity. Its function is as follows. Cysteine protease that plays a key role in autophagy by mediating both proteolytic activation and delipidation of ATG8 family proteins. The protease activity is required for proteolytic activation of ATG8 family proteins: cleaves the C-terminal amino acid of ATG8 proteins to reveal a C-terminal glycine. Exposure of the glycine at the C-terminus is essential for ATG8 proteins conjugation to phosphatidylethanolamine (PE) and insertion to membranes, which is necessary for autophagy. Preferred substrate is GABARAPL2 followed by MAP1LC3A and GABARAP. Protease activity is also required to counteract formation of high-molecular weight conjugates of ATG8 proteins (ATG8ylation): acts as a deubiquitinating-like enzyme that removes ATG8 conjugated to other proteins, such as ATG3. In addition to the protease activity, also mediates delipidation of ATG8 family proteins. Catalyzes delipidation of PE-conjugated forms of ATG8 proteins during macroautophagy. Compared to ATG4B, the major protein for proteolytic activation of ATG8 proteins, shows weaker ability to cleave the C-terminal amino acid of ATG8 proteins, while it displays stronger delipidation activity. Involved in phagophore growth during mitophagy independently of its protease activity and of ATG8 proteins: acts by regulating ATG9A trafficking to mitochondria and promoting phagophore-endoplasmic reticulum contacts during the lipid transfer phase of mitophagy. In terms of biological role, (Microbial infection) Mediates cleavage of an ATG8 protein homolog coded in the genome of cytopathogenic bovine viral diarrhea virus (BVDV). This Bos taurus (Bovine) protein is Cysteine protease ATG4A.